The chain runs to 279 residues: Phospholipase A and acyltransferase 5 (279 aa).

2 disordered regions span residues 1 to 53 (MGLS…GLNS) and 70 to 117 (QLPA…ENEG). Residues 97-106 (LETTPSQKAD) are compositionally biased toward polar residues. Residues 135–249 (LIEIFRIGYE…LRYGVPRSQQ (115 aa)) enclose the LRAT domain. Catalysis depends on residues His-145 and His-157. The active-site Acyl-thioester intermediate is Cys-233.

Belongs to the H-rev107 family. Highest expression level in testis and pancreas.

It localises to the cytoplasm. It is found in the cytosol. The catalysed reaction is a 1,2-diacyl-sn-glycero-3-phosphocholine + H2O = a 1-acyl-sn-glycero-3-phosphocholine + a fatty acid + H(+). It catalyses the reaction a 1,2-diacyl-sn-glycero-3-phosphocholine + H2O = a 2-acyl-sn-glycero-3-phosphocholine + a fatty acid + H(+). The enzyme catalyses 1-hexadecanoyl-2-(5Z,8Z,11Z,14Z-eicosatetraenoyl)-sn-glycero-3-phosphocholine + 1,2-di-(9Z-octadecenoyl)-sn-glycero-3-phosphoethanolamine = N-(5Z,8Z,11Z,14Z-eicosatetraenoyl)-1,2-di-(9Z-octadecenoyl)-sn-glycero-3-phosphoethanolamine + 1-hexadecanoyl-sn-glycero-3-phosphocholine + H(+). It carries out the reaction 1,2-di-(9Z-octadecenoyl)-sn-glycero-3-phosphoethanolamine + 1,2-dihexadecanoyl-sn-glycero-3-phosphocholine = N-hexadecanoyl-1,2-di-(9Z-octadecenoyl)-sn-glycero-3-phosphoethanolamine + 1-hexadecanoyl-sn-glycero-3-phosphocholine + H(+). The catalysed reaction is 1,2-di-(9Z-octadecenoyl)-sn-glycero-3-phosphoethanolamine + 1,2-dihexadecanoyl-sn-glycero-3-phosphocholine = N-hexadecanoyl-1,2-di-(9Z-octadecenoyl)-sn-glycero-3-phosphoethanolamine + 2-hexadecanoyl-sn-glycero-3-phosphocholine + H(+). It catalyses the reaction a 1,2-diacyl-sn-glycero-3-phosphoethanolamine + a 1,2-diacyl-sn-glycero-3-phosphocholine = an N-acyl-1,2-diacyl-sn-glycero-3-phosphoethanolamine + a 1-acyl-sn-glycero-3-phosphocholine + H(+). The enzyme catalyses a 1,2-diacyl-sn-glycero-3-phosphoethanolamine + a 1,2-diacyl-sn-glycero-3-phosphocholine = an N-acyl-1,2-diacyl-sn-glycero-3-phosphoethanolamine + a 2-acyl-sn-glycero-3-phosphocholine + H(+). It carries out the reaction 1-hexadecanoyl-2-(9Z-octadecenoyl)-sn-glycero-3-phosphocholine + 1,2-di-(9Z-octadecenoyl)-sn-glycero-3-phosphoethanolamine = N,1,2-tri-(9Z-octadecenoyl)-sn-glycero-3-phosphoethanolamine + 1-hexadecanoyl-sn-glycero-3-phosphocholine + H(+). Exhibits both phospholipase A1/2 and acyltransferase activities. Shows phospholipase A1 (PLA1) and A2 (PLA2) activity, catalyzing the calcium-independent release of fatty acids from the sn-1 or sn-2 position of glycerophospholipids. Shows N-acyltransferase activity, catalyzing the calcium-independent transfer of a fatty acyl group at the sn-1 position of phosphatidylcholine (PC) and other glycerophospholipids to the primary amine of phosphatidylethanolamine (PE), forming N-acylphosphatidylethanolamine (NAPE), which serves as precursor for N-acylethanolamines (NAEs). The sequence is that of Phospholipase A and acyltransferase 5 from Homo sapiens (Human).